The primary structure comprises 195 residues: Molybdenum cofactor guanylyltransferase (195 aa).

Residues L12 to G14, K25, N53, D70, and D100 contribute to the GTP site. D100 lines the Mg(2+) pocket.

The protein belongs to the MobA family. Monomer. It depends on Mg(2+) as a cofactor.

The protein localises to the cytoplasm. The enzyme catalyses Mo-molybdopterin + GTP + H(+) = Mo-molybdopterin guanine dinucleotide + diphosphate. In terms of biological role, transfers a GMP moiety from GTP to Mo-molybdopterin (Mo-MPT) cofactor (Moco or molybdenum cofactor) to form Mo-molybdopterin guanine dinucleotide (Mo-MGD) cofactor. The sequence is that of Molybdenum cofactor guanylyltransferase from Vibrio vulnificus (strain YJ016).